The sequence spans 3432 residues: Hybrid signal transduction histidine kinase G (3432 aa).

3 stretches are compositionally biased toward low complexity: residues 44-68, 76-90, and 126-145; these read HFSN…TTTN, SQLQ…QQNN, and QPQQ…SQKQ. 2 disordered regions span residues 44–109 and 124–240; these read HFSN…TNSS and DDQP…HNIN. The segment covering 146–157 has biased composition (polar residues); sequence TSQLNISGNNSG. 2 stretches are compositionally biased toward low complexity: residues 165–177 and 187–238; these read TISN…NFIH and KTPI…NNHN. One can recognise a Protein kinase domain in the interval 263 to 792; it reads LSFKHGYNSG…YGLKKDLEMF (530 aa). ATP contacts are provided by residues 269-277 and K305; that span reads YNSGLGGNF. Residues 399-419 show a composition bias toward low complexity; that stretch reads NNNNNNNNSYNNNYNNNNNNN. Disordered regions lie at residues 399–426 and 443–542; these read NNNN…TSPI and FQLN…STPL. Over residues 443–467 the composition is skewed to polar residues; sequence FQLNSSTNSTGSPLIITSQPMPFQL. Low complexity predominate over residues 468–479; sequence NSNSNTTASSSS. The segment covering 480 to 490 has biased composition (polar residues); sequence PITHSNLNTAI. Residues 491–508 are compositionally biased toward low complexity; the sequence is TSTTTSNSNSNNNSNNNN. Positions 509–525 are enriched in gly residues; the sequence is SGGGGGGGGGGGGGGGT. D585 functions as the Proton acceptor; for protein kinase activity in the catalytic mechanism. Positions 863-1121 are AAA; the sequence is GKEFIIVSGL…TMKIVLKNLD (259 aa). 871–878 is an ATP binding site; sequence GLSGVGKT. Disordered regions lie at residues 1040–1077 and 1261–1290; these read NNFS…NNNI and TTTT…NNSD. Positions 1261 to 1288 are enriched in low complexity; the sequence is TTTTNNNTTNNTNNNNTNNNNNNTNGNN. 2 helical membrane passes run 1567–1587 and 1599–1619; these read VMVI…TLLL and ISSW…IGHF. A TPR repeat occupies 1965–1998; sequence SQLMLAKAEFERINGNFEQAMEYFSEAISLAQQF. Disordered regions lie at residues 2071-2095 and 2299-2349; these read EYSN…QASI and GYNN…NNNK. A compositionally biased stretch (low complexity) spans 2073 to 2095; that stretch reads SNNNNNNNSNNNNNNANQSQASI. The GAF domain occupies 2215 to 2465; it reads YFDRLLKRLM…SNARLFIKVN (251 aa). Residues 2491 to 2769 enclose the Histidine kinase domain; that stretch reads NMSHEMRTPL…TFHFCVELGK (279 aa). Position 2494 is a phosphohistidine; by autocatalysis (H2494). Low complexity predominate over residues 2637 to 2648; sequence TTTNNKKQLNTD. 5 disordered regions span residues 2637–2673, 2785–2815, 2917–3030, 3134–3160, and 3247–3281; these read TTTN…SIDL, LLNN…NNNN, LSPK…NNNS, NNNI…HSQY, and NSIS…TITT. The span at 2649 to 2673 shows a compositional bias: acidic residues; it reads NDGDDDDDDDNENLDENNEDTSIDL. 3 stretches are compositionally biased toward low complexity: residues 2787–2815, 2935–3029, and 3134–3145; these read NNNN…NNNN, LSSS…HNNN, and NNNINNINNNNN. The region spanning 3305-3424 is the Response regulatory domain; it reads KILIVEDNEM…DLRYVINRYG (120 aa). A 4-aspartylphosphate modification is found at D3356.

The protein belongs to the protein kinase superfamily. Ser/Thr protein kinase family. Activation probably requires transfer of a phosphate group between a histidine in the kinase core (transmitter) domain and an aspartate of the receiver domain.

Its subcellular location is the membrane. The catalysed reaction is ATP + protein L-histidine = ADP + protein N-phospho-L-histidine.. The enzyme catalyses L-seryl-[protein] + ATP = O-phospho-L-seryl-[protein] + ADP + H(+). It carries out the reaction L-threonyl-[protein] + ATP = O-phospho-L-threonyl-[protein] + ADP + H(+). Acts as a receptor histidine kinase for a signal transduction pathway. This protein undergoes an ATP-dependent autophosphorylation at a conserved histidine residue in the kinase core, and a phosphoryl group is then transferred to a conserved aspartate residue in the receiver domain. The polypeptide is Hybrid signal transduction histidine kinase G (dhkG) (Dictyostelium discoideum (Social amoeba)).